A 184-amino-acid polypeptide reads, in one-letter code: Phosducin-like protein 3 (184 aa).

The tract at residues 45–184 is thioredoxin fold; sequence HGELKEIDEQ…VKNNKFKEDD (140 aa).

This sequence belongs to the phosducin family.

This Dictyostelium discoideum (Social amoeba) protein is Phosducin-like protein 3 (phlp3).